A 222-amino-acid polypeptide reads, in one-letter code: Cytochrome b6 (222 aa).

The chain crosses the membrane as a helical span at residues 39-59; the sequence is IFYCLGGITLVCFIIQFATGF. Cys-42 provides a ligand contact to heme c. Heme b-binding residues include His-93 and His-107. 3 helical membrane-spanning segments follow: residues 97–117, 123–143, and 193–213; these read ASMM…TGGF, LTWM…VTGY, and LHTF…FLMI. His-194 and His-209 together coordinate heme b.

It belongs to the cytochrome b family. PetB subfamily. The 4 large subunits of the cytochrome b6-f complex are cytochrome b6, subunit IV (17 kDa polypeptide, PetD), cytochrome f and the Rieske protein, while the 4 small subunits are PetG, PetL, PetM and PetN. The complex functions as a dimer. Heme b serves as cofactor. Heme c is required as a cofactor.

The protein localises to the cellular thylakoid membrane. Component of the cytochrome b6-f complex, which mediates electron transfer between photosystem II (PSII) and photosystem I (PSI), cyclic electron flow around PSI, and state transitions. The sequence is that of Cytochrome b6 from Rippkaea orientalis (strain PCC 8801 / RF-1) (Cyanothece sp. (strain PCC 8801)).